The chain runs to 300 residues: Putative 1-phosphofructokinase (300 aa).

Residues 214–219 (SDGAQG) and 246–247 (GD) contribute to the ATP site. Asp-247 (proton acceptor) is an active-site residue.

Belongs to the carbohydrate kinase PfkB family.

It catalyses the reaction beta-D-fructose 1-phosphate + ATP = beta-D-fructose 1,6-bisphosphate + ADP + H(+). Its function is as follows. Catalyzes the ATP-dependent phosphorylation of fructose-l-phosphate to fructose-l,6-bisphosphate. This is Putative 1-phosphofructokinase (fruK) from Mycoplasma pneumoniae (strain ATCC 29342 / M129 / Subtype 1) (Mycoplasmoides pneumoniae).